Consider the following 800-residue polypeptide: DEP domain-containing protein 1A (800 aa).

The DEP domain occupies 24–108 (FRAGMPLKKH…DNSQLYRFPS (85 aa)). 3 disordered regions span residues 147–173 (ETLE…RSRE), 306–326 (SQPG…AKNP), and 459–485 (INTS…ARAR). The 41-residue stretch at 281 to 321 (PLLTYQYYELFVNILVMCGYITTPKSQPGKRKNQEEPNCPQ) folds into the Rho-GAP domain. Residues 459–468 (INTSGSSVSS) are compositionally biased toward low complexity.

The protein is DEP domain-containing protein 1A (depdc1a) of Danio rerio (Zebrafish).